A 115-amino-acid polypeptide reads, in one-letter code: Type 3 secretion system chaperone PscG (115 aa).

The protein belongs to the YscG family. As to quaternary structure, forms a stable heterotrimeric complex with PscE and PscF/SctF in the cytoplasm. Co-stabilized by PscE.

Its subcellular location is the cytoplasm. In terms of biological role, chaperone of the type III secretion system (T3SS), also called injectisome, which is used to inject bacterial effector proteins into eukaryotic host cells, facilitating the establishment and dissemination of infection. Along with PscE, prevents premature polymerization of the PscF/SctF needle protein within the cytoplasm. Required for type III secretion needle assembly. Also required for cytotoxicity by influencing PscF/SctF levels. The polypeptide is Type 3 secretion system chaperone PscG (pscG) (Pseudomonas aeruginosa (strain ATCC 15692 / DSM 22644 / CIP 104116 / JCM 14847 / LMG 12228 / 1C / PRS 101 / PAO1)).